The chain runs to 368 residues: Peptide chain release factor 2 (368 aa).

Residue Gln-250 is modified to N5-methylglutamine.

The protein belongs to the prokaryotic/mitochondrial release factor family. Methylated by PrmC. Methylation increases the termination efficiency of RF2.

It localises to the cytoplasm. In terms of biological role, peptide chain release factor 2 directs the termination of translation in response to the peptide chain termination codons UGA and UAA. The polypeptide is Peptide chain release factor 2 (Rickettsia bellii (strain RML369-C)).